Here is a 90-residue protein sequence, read N- to C-terminus: Putative UPF0401 protein YpjI (90 aa).

It belongs to the UPF0401 family.

The protein is Putative UPF0401 protein YpjI (ypjI) of Escherichia coli (strain K12).